A 154-amino-acid chain; its full sequence is Endoribonuclease YbeY (154 aa).

Positions 118, 122, and 128 each coordinate Zn(2+).

Belongs to the endoribonuclease YbeY family. It depends on Zn(2+) as a cofactor.

Its subcellular location is the cytoplasm. Its function is as follows. Single strand-specific metallo-endoribonuclease involved in late-stage 70S ribosome quality control and in maturation of the 3' terminus of the 16S rRNA. In Chloroflexus aurantiacus (strain ATCC 29366 / DSM 635 / J-10-fl), this protein is Endoribonuclease YbeY.